We begin with the raw amino-acid sequence, 373 residues long: GPN-loop GTPase 1 (373 aa).

Ala2 is modified (N-acetylalanine). Position 29–34 (29–34) interacts with GTP; sequence GSGKTT. The Gly-Pro-Asn (GPN)-loop; involved in dimer interface motif lies at 86 to 88; it reads GPN. 189–192 is a binding site for GTP; sequence NKTD. 3 positions are modified to phosphoserine: Ser301, Ser312, and Ser314. The interval 304–373 is disordered; that stretch reads LDTGTATGSS…SMAQYWKKNK (70 aa). Thr328 bears the Phosphothreonine mark. Positions 330–342 are enriched in acidic residues; that stretch reads DEEDEEADSDTDD. Phosphoserine is present on Ser338. Thr340 carries the post-translational modification Phosphothreonine. A compositionally biased stretch (basic and acidic residues) spans 343–355; sequence IDHRVTEESREEP.

It belongs to the GPN-loop GTPase family. In terms of assembly, heterodimer with GPN3. Binds to RNA polymerase II (RNAPII). Interacts directly with RNAPII subunits RPB4 and RPB7 and the CTD of RPB1. Interacts with XPA.

The protein localises to the cytoplasm. It localises to the nucleus. Its function is as follows. Small GTPase required for proper nuclear import of RNA polymerase II (RNAPII). May act at an RNAP assembly step prior to nuclear import. Forms an interface between the RNA polymerase II enzyme and chaperone/scaffolding proteins, suggesting that it is required to connect RNA polymerase II to regulators of protein complex formation. May be involved in nuclear localization of XPA. This chain is GPN-loop GTPase 1, found in Bos taurus (Bovine).